The sequence spans 94 residues: Co-chaperonin GroES (94 aa).

The protein belongs to the GroES chaperonin family. In terms of assembly, heptamer of 7 subunits arranged in a ring. Interacts with the chaperonin GroEL.

The protein resides in the cytoplasm. Its function is as follows. Together with the chaperonin GroEL, plays an essential role in assisting protein folding. The GroEL-GroES system forms a nano-cage that allows encapsulation of the non-native substrate proteins and provides a physical environment optimized to promote and accelerate protein folding. GroES binds to the apical surface of the GroEL ring, thereby capping the opening of the GroEL channel. This chain is Co-chaperonin GroES, found in Bacillus mycoides (strain KBAB4) (Bacillus weihenstephanensis).